A 215-amino-acid chain; its full sequence is Sodium channel regulatory subunit beta-2 (215 aa).

A signal peptide spans methionine 1 to serine 29. Topologically, residues methionine 30–threonine 157 are extracellular. Residues valine 32–arginine 154 enclose the Ig-like C2-type domain. Residues asparagine 42, asparagine 66, and asparagine 74 are each glycosylated (N-linked (GlcNAc...) asparagine). Cystine bridges form between cysteine 50–cysteine 127 and cysteine 72–cysteine 75. Residues valine 158–valine 179 traverse the membrane as a helical segment. Residues valine 180–lysine 215 lie on the Cytoplasmic side of the membrane. A disordered region spans residues lysine 187–lysine 215. Residues glutamine 189–lysine 215 show a composition bias toward basic and acidic residues. Residue serine 192 is modified to Phosphoserine. Threonine 204 carries the post-translational modification Phosphothreonine.

This sequence belongs to the sodium channel auxiliary subunit SCN2B (TC 8.A.17) family. In terms of assembly, a voltage-gated sodium (Nav) channel consists of an ion-conducting pore-forming alpha subunit functional on its own that is regulated by one or more beta subunits. The beta subunit SCN2B is disulfide-linked to the pore-forming alpha subunit. Interacts with SCN1A; regulatory subunit of SCN1A/Nav1.1. Interacts with SCN2A; regulatory subunit of SCN2A/Nav1.2. Interacts with SCN3A; regulatory subunit of SCN3A/Nav1.3. Interacts with SCN5A; regulatory subunit of SCN5A/Nav1.5. Interacts with SCN8A; regulatory subunit of SCN8A/Nav1.6. Interacts with SCN9A; regulatory subunit of SCN9A/Nav1.7. Interacts with SCN10A; regulatory subunit of SCN10A/Nav1.8. Interacts with TNR; may play a crucial role in clustering and regulation of activity of SCN2B-containing Nav channels at nodes of Ranvier.

It localises to the cell membrane. The protein resides in the cell projection. The protein localises to the axon. Regulatory subunit of multiple voltage-gated sodium (Nav) channels directly mediating the depolarization of excitable membranes. Navs, also called VGSCs (voltage-gated sodium channels) or VDSCs (voltage-dependent sodium channels), operate by switching between closed and open conformations depending on the voltage difference across the membrane. In the open conformation they allow Na(+) ions to selectively pass through the pore, along their electrochemical gradient. The influx of Na+ ions provokes membrane depolarization, initiating the propagation of electrical signals throughout cells and tissues. The accessory beta subunits participate in localization and functional modulation of the Nav channels. Modulates the activity of SCN1A/Nav1.1, SCN2A/Nav1.2, SCN2A/Nav1.3, SCN5A/Nav1.5, SCN8A/Nav1.6, SCN9A/Nav1.7 and SCN10A/Nav1.8. The chain is Sodium channel regulatory subunit beta-2 from Homo sapiens (Human).